The primary structure comprises 920 residues: Disintegrin and metalloproteinase domain-containing protein 19 (920 aa).

The N-terminal stretch at 1–26 is a signal peptide; that stretch reads MPGRAGVARFCLLALALQLHWPLAAC. A propeptide spanning residues 27 to 204 is cleaved from the precursor; sequence EPGWTTRGSQ…TKKQPRRMKR (178 aa). Residues 27 to 703 lie on the Extracellular side of the membrane; the sequence is EPGWTTRGSQ…VDSGPLPPKS (677 aa). The Cysteine switch motif lies at 131-138; that stretch reads STCRGIRG. Cys133 serves as a coordination point for Zn(2+). N-linked (GlcNAc...) asparagine glycosylation is present at Asn145. The 199-residue stretch at 211–409 folds into the Peptidase M12B domain; sequence KYVELYLVAD…GGGMCLSNMP (199 aa). 3 disulfide bridges follow: Cys321–Cys404, Cys361–Cys388, and Cys362–Cys371. Residue His346 coordinates Zn(2+). Glu347 is a catalytic residue. Residues His350 and His356 each contribute to the Zn(2+) site. The Disintegrin domain occupies 417 to 503; that stretch reads GRRCGNGYLE…HCPTNYYQMD (87 aa). Residues Asn445 and Asn448 are each glycosylated (N-linked (GlcNAc...) asparagine). Cysteines 475 and 495 form a disulfide. Asn649 carries an N-linked (GlcNAc...) asparagine glycan. The EGF-like domain maps to 654–686; the sequence is ETEGCGKKCNGHGVCNNNKNCHCFPGWSPPFCN. 3 disulfides stabilise this stretch: Cys658/Cys668, Cys662/Cys674, and Cys676/Cys685. Residues 704 to 724 form a helical membrane-spanning segment; that stretch reads VGPVIAGVFSALFVLAVLVLL. Residues 725 to 920 lie on the Cytoplasmic side of the membrane; that stretch reads CHCYRQSHKL…RVGAIISSKI (196 aa). Residues 755–920 form a disordered region; the sequence is SQSGGTGHAN…RVGAIISSKI (166 aa). The segment covering 767 to 783 has biased composition (polar residues); that stretch reads FKLQTPQGKRKVTNTPE. A compositionally biased stretch (basic and acidic residues) spans 825 to 834; sequence ARIERKESAR. Positions 835–846 match the SH3-binding motif; it reads RPPPSRPMPPAP. 2 stretches are compositionally biased toward pro residues: residues 835–846 and 888–903; these read RPPPSRPMPPAP and TSGP…PVPK.

In terms of assembly, interacts with SH3PXD2A. Zn(2+) serves as cofactor. In terms of processing, the precursor is cleaved by a furin endopeptidase. In terms of tissue distribution, widely expressed, with the highest expression in bone, heart and lung, followed by brain and spleen and relatively low expression in liver, skeletal muscle, kidney and testis. In bone, primarily expressed in cell of the osteoblast lineage and not detected in mature osteoclasts.

The protein resides in the membrane. Its function is as follows. Participates in the proteolytic processing of beta-type neuregulin isoforms which are involved in neurogenesis and synaptogenesis, suggesting a regulatory role in glial cell. Also cleaves alpha-2 macroglobulin. May be involved in osteoblast differentiation and/or osteoblast activity in bone. This Mus musculus (Mouse) protein is Disintegrin and metalloproteinase domain-containing protein 19 (Adam19).